Reading from the N-terminus, the 447-residue chain is Probable arabinosyltransferase ARAD1 (447 aa).

Topologically, residues 1–6 (MARKSS) are cytoplasmic. The chain crosses the membrane as a helical; Signal-anchor for type II membrane protein span at residues 7–29 (LLKRAAIAVVSVIAIYVILNASV). Residues 30 to 447 (SRSLPSSSDL…TNQTGLITSI (418 aa)) lie on the Lumenal side of the membrane. A compositionally biased stretch (low complexity) spans 32 to 41 (SLPSSSDLPR). The disordered stretch occupies residues 32–52 (SLPSSSDLPRQLIREDDDDEG). N427, N432, and N439 each carry an N-linked (GlcNAc...) asparagine glycan.

The protein belongs to the glycosyltransferase 47 family. Homodimer and heterodimer with ARAD2. Expressed in root vasculature, cotyledons, leaves, stems, vascular tissue of sepals, petals and stamens, pollen grains, mature siliques and abscission region of seeds.

Its subcellular location is the golgi apparatus membrane. Probable arabinosyl transferase responsible for the polymerization of arabinose into the arabinan of arabinogalactan. May function as inverting enzyme using UDP-beta-L-arabinopyranoside. May be important for arabinan side chains of rhamnogalacturonan I (RG-I), a major component of pectins. Cell wall pectic arabinans are involved in thigmomorphogenesis response of inflorescence stems to mechanical stress. This is Probable arabinosyltransferase ARAD1 (ARAD1) from Arabidopsis thaliana (Mouse-ear cress).